A 493-amino-acid chain; its full sequence is Na(+)/H(+) antiporter subunit D (493 aa).

14 consecutive transmembrane segments (helical) span residues 4–23 (LVIL…ILFA), 30–52 (RVIS…VDVY), 72–94 (LVAD…VCLF), 107–126 (YYFY…AFLT), 130–149 (FNLF…LIVL), 162–184 (YVVI…YSIT), 204–226 (VLNV…FPLY), 233–255 (YFGP…GIYA), 270–292 (FTHT…GAVS), 299–321 (ILSY…YTQL), 325–347 (GAIY…AGAT), 368–390 (WLAW…SGFF), 405–427 (YIIA…KIFI), and 448–470 (LLLP…EPIF).

The protein belongs to the CPA3 antiporters (TC 2.A.63) subunit D family. As to quaternary structure, forms a heterooligomeric complex that consists of seven subunits: MrpA, MrpB, MrpC, MrpD, MrpE, MrpF and MrpG.

The protein localises to the cell membrane. Functionally, mnh complex is a Na(+)Li(+)/H(+) antiporter involved in Na(+) and/or Li(+) excretion and Na(+) resistance. Na(+)/H(+) antiport consumes a transmembrane electrical potential, and is thus inferred to be electrogenic. Does not transport K(+), Ca(2+) or Mg(2+). In terms of biological role, mrp complex is a Na(+)/H(+) antiporter involved in Na(+) excretion and Na(+) resistance. The polypeptide is Na(+)/H(+) antiporter subunit D (mrpD) (Alkalihalophilus pseudofirmus (strain ATCC BAA-2126 / JCM 17055 / OF4) (Bacillus pseudofirmus)).